A 689-amino-acid chain; its full sequence is Homoaconitase, mitochondrial (689 aa).

Residues 1–17 (MVVLRRSFHVYTRLQRG) constitute a mitochondrion transit peptide. [4Fe-4S] cluster is bound by residues Cys336, Cys403, and Cys406.

The protein belongs to the aconitase/IPM isomerase family. [4Fe-4S] cluster serves as cofactor.

Its subcellular location is the mitochondrion. The catalysed reaction is (2R,3S)-homoisocitrate = cis-homoaconitate + H2O. The protein operates within amino-acid biosynthesis; L-lysine biosynthesis via AAA pathway; L-alpha-aminoadipate from 2-oxoglutarate: step 3/5. In terms of biological role, catalyzes the reversible hydration of cis-homoaconitate to (2R,3S)-homoisocitrate, a step in the alpha-aminoadipate pathway for lysine biosynthesis. This chain is Homoaconitase, mitochondrial (LYS4), found in Candida glabrata (strain ATCC 2001 / BCRC 20586 / JCM 3761 / NBRC 0622 / NRRL Y-65 / CBS 138) (Yeast).